A 403-amino-acid polypeptide reads, in one-letter code: Arginine biosynthesis bifunctional protein ArgJ (403 aa).

Residues 1–11 (MVQSVLSSTSH) show a composition bias toward polar residues. The tract at residues 1–21 (MVQSVLSSTSHGSERADMSAA) is disordered. Substrate is bound by residues Thr-161, Lys-183, Thr-194, Glu-273, Asn-398, and Thr-403. Thr-194 (nucleophile) is an active-site residue.

This sequence belongs to the ArgJ family. In terms of assembly, heterotetramer of two alpha and two beta chains.

The protein resides in the cytoplasm. It carries out the reaction N(2)-acetyl-L-ornithine + L-glutamate = N-acetyl-L-glutamate + L-ornithine. The enzyme catalyses L-glutamate + acetyl-CoA = N-acetyl-L-glutamate + CoA + H(+). It participates in amino-acid biosynthesis; L-arginine biosynthesis; L-ornithine and N-acetyl-L-glutamate from L-glutamate and N(2)-acetyl-L-ornithine (cyclic): step 1/1. Its pathway is amino-acid biosynthesis; L-arginine biosynthesis; N(2)-acetyl-L-ornithine from L-glutamate: step 1/4. Its function is as follows. Catalyzes two activities which are involved in the cyclic version of arginine biosynthesis: the synthesis of N-acetylglutamate from glutamate and acetyl-CoA as the acetyl donor, and of ornithine by transacetylation between N(2)-acetylornithine and glutamate. This Rhodococcoides fascians (Rhodococcus fascians) protein is Arginine biosynthesis bifunctional protein ArgJ.